A 404-amino-acid polypeptide reads, in one-letter code: Zinc finger TRAF-type-containing protein 1 (404 aa).

The span at 1–13 (MSGAEEAGGGGPA) shows a compositional bias: gly residues. A disordered region spans residues 1 to 22 (MSGAEEAGGGGPAAGPAGSVPA). An RING-type; degenerate zinc finger spans residues 111–156 (CTVCLDLPKASVYQCTNGHLMCAGCFIHLLADARLKEEQATCPNCR). The TRAF-type zinc finger occupies 152 to 225 (CPNCRCEISK…PWHGPFHELT (74 aa)).

The protein belongs to the ZFTRAF1 family. As to quaternary structure, interacts with LGALS3.

It localises to the cytoplasm. It is found in the perinuclear region. The polypeptide is Zinc finger TRAF-type-containing protein 1 (Homo sapiens (Human)).